The sequence spans 354 residues: Cysteine and histidine-rich domain-containing protein morgana (354 aa).

Positions 4, 9, 23, 26, 41, 42, 58, 63, 140, 145, 159, 162, 177, 178, 194, and 199 each coordinate Zn(2+). 2 CHORD domains span residues 4 to 63 (CYNR…LAKH) and 140 to 199 (CKNN…YGEH). The 92-residue stretch at 210–301 (VVQCRYDWHQ…LEPGSWSNLN (92 aa)) folds into the CS domain. Ser-324 and Ser-339 each carry phosphoserine.

Interacts with Hsp83.

The protein localises to the cytoplasm. The protein resides in the nucleus. It is found in the cytoskeleton. It localises to the spindle. Regulates centrosome duplication and mitotic spindle dynamics. Also involved in controlling the size of dendritic arbors. May act as co-chaperone for Hsp83. During mitotic spindle assembly, regulates microtubule (MT) dynamics by binding to MTs and promoting MT polymerisation. Promotes the elongation and retraction of terminal branches in response to changes in body size, possibly acting downstream of the TORC2 pathway to enable proportional scaling of dendritic arbors. The sequence is that of Cysteine and histidine-rich domain-containing protein morgana from Drosophila melanogaster (Fruit fly).